The sequence spans 592 residues: Inactive glycosyltransferase 25 family member 3 (592 aa).

The N-terminal stretch at 1–19 (MHVARLLPLLLLLGQQLRA) is a signal peptide. 4 N-linked (GlcNAc...) asparagine glycosylation sites follow: Asn-72, Asn-150, Asn-234, and Asn-357. Residues 540–592 (AEWLSDTETSSPWDDDSGRLISQTGSQKALRGPHLHLTGSSGHSLHPHHRDEL) form a disordered region. Positions 589 to 592 (RDEL) match the Prevents secretion from ER motif.

This sequence belongs to the glycosyltransferase 25 family.

The protein resides in the endoplasmic reticulum lumen. Its function is as follows. Probable cell adhesion protein involved in leukocyte transmigration across the blood-brain barrier. Does not express any beta-galactosyltransferase activity in vitro. This chain is Inactive glycosyltransferase 25 family member 3 (Cercam), found in Mus musculus (Mouse).